Reading from the N-terminus, the 309-residue chain is Dicarboxylate carrier UCP2 (309 aa).

The Mitochondrial intermembrane segment spans residues 1-16 (MVGFKATDVPPTATVK). Solcar repeat units follow at residues 11–106 (PTAT…VKQF), 114–203 (AGIG…IKDT), and 212–297 (DDLP…LKRA). The tract at residues 16-63 (KFLGAGTAACIADLITFPLDTAKVRLQIQGESQGLARTAASAQYRGVL) is important for interaction with long-chain fatty acids. Residues 17–40 (FLGAGTAACIADLITFPLDTAKVR) form a helical membrane-spanning segment. The Mitochondrial matrix portion of the chain corresponds to 41-77 (LQIQGESQGLARTAASAQYRGVLGTILTMVRTEGPRS). Residues 78–103 (LYNGLVAGLQRQMSFASVRIGLYDSV) form a helical membrane-spanning segment. Residues 104 to 119 (KQFYTKGSEHAGIGSR) lie on the Mitochondrial intermembrane side of the membrane. A helical membrane pass occupies residues 120 to 145 (LLAGSTTGALAVAVAQPTDVVKVRFQ). Residues 146 to 173 (AQARAGGGRRYQSTVEAYKTIAREEGIR) are Mitochondrial matrix-facing. The helical transmembrane segment at 174–199 (GLWKGTSPNVARNAIVNCTELVTYDL) threads the bilayer. The Mitochondrial intermembrane portion of the chain corresponds to 200-217 (IKDTLLKANLMTDDLPCH). Residues 218 to 242 (FTSAFGAGFCTTVIASPVDVVKTRY) form a helical membrane-spanning segment. Over 243–268 (MNSALGQYHSAGHCALTMLRKEGPRA) the chain is Mitochondrial matrix. Residues 269-294 (FYKGFMPSFLRLGSWNVVMFVTYEQL) form a helical membrane-spanning segment. Positions 278 to 285 (LRLGSWNV) are important for interaction with long-chain fatty acids. Topologically, residues 295 to 309 (KRALMAAYESREAPF) are mitochondrial intermembrane.

The protein belongs to the mitochondrial carrier (TC 2.A.29) family. Homotetramer. Adopts an asymmetrical dimer of dimers functional form. Interacts with MICU1 (when methylated); leading to decrease the calcium sensitivity of MICU1. In terms of tissue distribution, expressed in a variety of organs, with predominant expression in the heart, lung and spleen.

Its subcellular location is the mitochondrion inner membrane. The catalysed reaction is L-aspartate(out) + phosphate(in) + H(+)(in) = L-aspartate(in) + phosphate(out) + H(+)(out). It catalyses the reaction oxaloacetate(out) + phosphate(in) + H(+)(in) = oxaloacetate(in) + phosphate(out) + H(+)(out). The enzyme catalyses (S)-malate(out) + phosphate(in) + H(+)(in) = (S)-malate(in) + phosphate(out) + H(+)(out). It carries out the reaction malonate(out) + phosphate(in) + H(+)(in) = malonate(in) + phosphate(out) + H(+)(out). The catalysed reaction is sulfate(out) + phosphate(in) + H(+)(in) = sulfate(in) + phosphate(out) + H(+)(out). It catalyses the reaction (S)-malate(out) = (S)-malate(in). The enzyme catalyses L-aspartate(out) = L-aspartate(in). It carries out the reaction phosphate(in) = phosphate(out). The catalysed reaction is chloride(in) = chloride(out). It catalyses the reaction H(+)(in) = H(+)(out). The enzyme catalyses a long-chain fatty acid(out) = a long-chain fatty acid(in). Functionally, antiporter that exports dicarboxylate intermediates of the Krebs cycle in exchange for phosphate plus a proton across the inner membrane of mitochondria, a process driven by mitochondrial motive force with an overall impact on glycolysis, glutaminolysis and glutathione-dependent redox balance. Continuous export of oxaloacetate and related four-carbon dicarboxylates from mitochondrial matrix into the cytosol negatively regulates the oxidation of acetyl-CoA substrates via the Krebs cycle lowering the ATP/ADP ratio and reactive oxygen species (ROS) production. May mediate inducible proton entry into the mitochondrial matrix affecting ATP turnover as a protection mechanism against oxidative stress. The proton currents are most likely associated with fatty acid flipping across the inner membrane of mitochondria in a metabolic process regulated by free fatty acids and purine nucleotides. Regulates the use of glucose as a source of energy. Required for glucose-induced DRP1-dependent mitochondrial fission and neuron activation in the ventromedial nucleus of the hypothalamus (VMH). This mitochondrial adaptation mechanism modulates the VMH pool of glucose-excited neurons with an impact on systemic glucose homeostasis. Regulates ROS levels and metabolic reprogramming of macrophages during the resolution phase of inflammation. Attenuates ROS production in response to IL33 to preserve the integrity of the Krebs cycle required for persistent production of itaconate and subsequent GATA3-dependent differentiation of inflammation-resolving alternatively activated macrophages. Can unidirectionally transport anions including L-malate, L-aspartate, phosphate and chloride ions. Does not mediate adaptive thermogenesis. The protein is Dicarboxylate carrier UCP2 (Ucp2) of Rattus norvegicus (Rat).